The chain runs to 108 residues: CRISPR-associated endoribonuclease Cas2 (108 aa).

Residue D15 participates in Mg(2+) binding.

It belongs to the CRISPR-associated endoribonuclease Cas2 protein family. As to quaternary structure, homodimer, forms a heterotetramer with a Cas1 homodimer. Mg(2+) serves as cofactor.

Its function is as follows. CRISPR (clustered regularly interspaced short palindromic repeat), is an adaptive immune system that provides protection against mobile genetic elements (viruses, transposable elements and conjugative plasmids). CRISPR clusters contain sequences complementary to antecedent mobile elements and target invading nucleic acids. CRISPR clusters are transcribed and processed into CRISPR RNA (crRNA). Functions as a ssRNA-specific endoribonuclease. Involved in the integration of spacer DNA into the CRISPR cassette. This Paracidovorax avenae (strain ATCC 19860 / DSM 7227 / CCUG 15838 / JCM 20985 / LMG 2117 / NCPPB 1011) (Acidovorax avenae) protein is CRISPR-associated endoribonuclease Cas2.